The following is a 200-amino-acid chain: MIKLTARQQQILDLIRDHIAETGYPPTRAEIAEILGFKSANAAEEHLKALARKGAIEMIAGASRGIRLPEVQSGIPLVGRVAAGSPILAQEHIEDYCDIPHNFFSPKADFLLTVHGMSMKDIGILDGDLLAVHKTDQVRNGDIVVARIDNEVTVKRFKRERNRAQVELWPENPDFNVIEVDLRDANFAIEGLSVGVIRRS.

Positions Arg28–Lys48 form a DNA-binding region, H-T-H motif. Residues Ser118 and Lys155 each act as for autocatalytic cleavage activity in the active site.

This sequence belongs to the peptidase S24 family. In terms of assembly, homodimer.

It carries out the reaction Hydrolysis of Ala-|-Gly bond in repressor LexA.. Represses a number of genes involved in the response to DNA damage (SOS response), including recA and lexA. In the presence of single-stranded DNA, RecA interacts with LexA causing an autocatalytic cleavage which disrupts the DNA-binding part of LexA, leading to derepression of the SOS regulon and eventually DNA repair. This Teredinibacter turnerae (strain ATCC 39867 / T7901) protein is LexA repressor.